The following is a 336-amino-acid chain: Ribose-phosphate pyrophosphokinase (336 aa).

Residues 43–45 (DQE) and 102–103 (RQ) contribute to the ATP site. Positions 136 and 178 each coordinate Mg(2+). Lysine 201 is an active-site residue. Residues arginine 203, aspartate 227, and 231–235 (DTAGT) each bind D-ribose 5-phosphate.

Belongs to the ribose-phosphate pyrophosphokinase family. Class I subfamily. In terms of assembly, homohexamer. Mg(2+) is required as a cofactor.

Its subcellular location is the cytoplasm. It carries out the reaction D-ribose 5-phosphate + ATP = 5-phospho-alpha-D-ribose 1-diphosphate + AMP + H(+). It functions in the pathway metabolic intermediate biosynthesis; 5-phospho-alpha-D-ribose 1-diphosphate biosynthesis; 5-phospho-alpha-D-ribose 1-diphosphate from D-ribose 5-phosphate (route I): step 1/1. In terms of biological role, involved in the biosynthesis of the central metabolite phospho-alpha-D-ribosyl-1-pyrophosphate (PRPP) via the transfer of pyrophosphoryl group from ATP to 1-hydroxyl of ribose-5-phosphate (Rib-5-P). The chain is Ribose-phosphate pyrophosphokinase from Cereibacter sphaeroides (strain KD131 / KCTC 12085) (Rhodobacter sphaeroides).